The chain runs to 1344 residues: MALGDLMVSRFSQSSVSLVSNHRYDEDCVSSHDDGDSRRKDSEAKSSSSYGNGTTEGAATATSMAYLPQTIVLCELRHDASEASAPLGTSEIVLVPKWRLKERMKTGCVALVLCLNITVDPPDVIKISPCARIEAWIDPFSMAPPKALETIGKNLSTQYERWQPRARYKVQLDPTVDEVRKLCLTCRKYAKTERVLFHYNGHGVPKPTANGEIWVFNKSYTQYIPLPISELDSWLKTPSIYVFDCSAARMILNAFAELHDWGSSGSSGSSRDCILLAACDVHETLPQSVEFPADVFTSCLTTPIKMALKWFCRRSLLKEIIDESLIDRIPGRQNDRKTLLGELNWIFTAVTDTIAWNVLPHELFQRLFRQDLLVASLFRNFLLAERIMRSANCNPISHPMLPPTHQHHMWDAWDMAAEICLSQLPQLVLDPSTEFQPSPFFTEQLTAFEVWLDHGSEHKKPPEQLPIVLQVLLSQCHRFRALVLLGRFLDMGSWAVDLALSVGIFPYVLKLLQTTTNELRQILVFIWTKILALDKSCQIDLVKDGGHTYFIRFLDSSGAFPEQRAMAAFVLAVIVDGHRRGQEACLEANLIGVCLGHLEASRPSDPQPEPLFLQWLCLCLGKLWEDFMEAQIMGREANAFEKLAPLLSEPQPEVRAAAVFALGTLLDIGFDSNKSVVEDEFDDDEKIRAEDAIIKSLLDVVSDGSPLVRAEVAVALARFAFGHKQHLKLAAASYWKPQSSSLLTSLPSIAKFHDPGSATIVSLHMSPLTRASTDSQPVARESRISSSPLGSSGLMQGSPLSDDSSLHSDSGMMHDSVSNGAVHQPRLLDNAVYSQCVRAMFALAKDPSPRIASLGRRVLSIIGIEQVVAKPSKPTGRPGEAATTSHTPLAGLARSSSWFDMHAGNLPLSFRTPPVSPPRTNYLSGLRRVCSLEFRPHLLGSPDSGLADPLLGASGSERSLLPLSTIYGWSCGHFSKPLLGGADASQEIAAKREEKEKFALEHIAKCQHSSISKLNNNPIANWDTRFETGTKTALLHPFSPIVVAADENERIRVWNYEEATLLNGFDNHDFPDKGISKLCLINELDDSLLLVASCDGSVRIWKNYATKGKQKLVTGFSSIQGHKPGARDLNAVVDWQQQSGYLYASGETSTVTLWDLEKEQLVRSVPSESECGVTALSASQVHGGQLAAGFADGSLRLYDVRSPEPLVCATRPHQKVERVVGLSFQPGLDPAKVVSASQAGDIQFLDLRTTRDTYLTIDAHRGSLTALAVHRHAPIIASGSAKQLIKVFSLQGEQLGIIRYYPSFMAQKIGSVSCLTFHPYQVLLAAGAADSFVSIYTHDNSQAR.

Residues 28–44 (CVSSHDDGDSRRKDSEA) show a composition bias toward basic and acidic residues. 2 disordered regions span residues 28 to 56 (CVSS…GTTE) and 771 to 818 (ASTD…DSVS). Residues 785–816 (SSSPLGSSGLMQGSPLSDDSSLHSDSGMMHDS) are compositionally biased toward low complexity. WD repeat units lie at residues 1025 to 1064 (RFET…LLNG), 1070 to 1111 (FPDK…GKQK), 1125 to 1164 (GARD…LVRS), 1168 to 1208 (ESEC…PLVC), 1214 to 1255 (QKVE…DTYL), 1259 to 1298 (AHRG…LGII), and 1307 to 1344 (QKIG…SQAR).

It belongs to the WD repeat RAPTOR family. In terms of assembly, interacts with TOR, ATPK1 and ML1. Interacts with KIN10. Post-translationally, phosphorylated by KIN10. In terms of tissue distribution, expressed in roots, leaves, flowers and seeds.

The protein resides in the cytoplasm. In terms of biological role, probable component of the plant TOR kinase pathway that recruits substrates for TOR. Modulates plant cell growth and regulates the activity of ATPK1 kinase in response to osmotic stress. This is Regulatory-associated protein of TOR 1 (RAPTOR1) from Arabidopsis thaliana (Mouse-ear cress).